The chain runs to 125 residues: Large ribosomal subunit protein bL17 (125 aa).

This sequence belongs to the bacterial ribosomal protein bL17 family. In terms of assembly, part of the 50S ribosomal subunit. Contacts protein L32.

The protein is Large ribosomal subunit protein bL17 of Acinetobacter baumannii (strain AB307-0294).